Here is a 383-residue protein sequence, read N- to C-terminus: S-adenosylmethionine synthase (383 aa).

H15 lines the ATP pocket. Residue D17 coordinates Mg(2+). K(+) is bound at residue E43. Positions 56 and 99 each coordinate L-methionine. Residues 99–109 (QSQDINQGVDR) are flexible loop. ATP-binding positions include 164–166 (DAK), 230–231 (RF), D239, 245–246 (RK), A262, and K266. L-methionine is bound at residue D239. K270 contacts L-methionine.

It belongs to the AdoMet synthase family. In terms of assembly, homotetramer; dimer of dimers. The cofactor is Mg(2+). Requires K(+) as cofactor.

It is found in the cytoplasm. The enzyme catalyses L-methionine + ATP + H2O = S-adenosyl-L-methionine + phosphate + diphosphate. The protein operates within amino-acid biosynthesis; S-adenosyl-L-methionine biosynthesis; S-adenosyl-L-methionine from L-methionine: step 1/1. Functionally, catalyzes the formation of S-adenosylmethionine (AdoMet) from methionine and ATP. The overall synthetic reaction is composed of two sequential steps, AdoMet formation and the subsequent tripolyphosphate hydrolysis which occurs prior to release of AdoMet from the enzyme. This chain is S-adenosylmethionine synthase, found in Actinobacillus succinogenes (strain ATCC 55618 / DSM 22257 / CCUG 43843 / 130Z).